An 855-amino-acid polypeptide reads, in one-letter code: Sucrose synthase 7 (855 aa).

The GT-B glycosyltransferase stretch occupies residues 279 to 758; the sequence is SIFNIVIFSI…GLQRIYECYT (480 aa).

The protein belongs to the glycosyltransferase 1 family. Plant sucrose synthase subfamily. In terms of tissue distribution, predominantly expressed in roots, flowers and immature seeds.

The protein localises to the cytoplasm. It is found in the membrane. It carries out the reaction an NDP-alpha-D-glucose + D-fructose = a ribonucleoside 5'-diphosphate + sucrose + H(+). Its function is as follows. Sucrose-cleaving enzyme that provides UDP-glucose and fructose for various metabolic pathways. The polypeptide is Sucrose synthase 7 (SUS7) (Oryza sativa subsp. japonica (Rice)).